The chain runs to 364 residues: 1-acyl-sn-glycerol-3-phosphate acyltransferase epsilon (364 aa).

2 helical membrane passes run 15 to 35 and 61 to 81; these read LLPSVVLLGTAPTYVLAWGVW and MVLFFFENYTGVQILLYGDLP. The HXXXXD motif motif lies at 93 to 98; sequence HQSTVD. A helical transmembrane segment spans residues 344–364; that stretch reads LYVNTWIYGTLLGCLWVTIKA.

The protein belongs to the 1-acyl-sn-glycerol-3-phosphate acyltransferase family. In terms of tissue distribution, widely expressed.

The protein resides in the endoplasmic reticulum membrane. The protein localises to the nucleus envelope. Its subcellular location is the mitochondrion. It carries out the reaction a 1-acyl-sn-glycero-3-phosphate + an acyl-CoA = a 1,2-diacyl-sn-glycero-3-phosphate + CoA. It catalyses the reaction 1-(9Z-octadecenoyl)-sn-glycero-3-phosphate + tetradecanoyl-CoA = 1-(9Z)-octadecenoyl-2-tetradecanoyl-sn-glycero-3-phosphate + CoA. The enzyme catalyses pentadecanoyl-CoA + 1-(9Z-octadecenoyl)-sn-glycero-3-phosphate = 1-(9Z)-octadecenoyl-2-pentadecanoyl-sn-glycero-3-phosphate + CoA. The catalysed reaction is 1-(9Z-octadecenoyl)-sn-glycero-3-phosphate + octadecanoyl-CoA = 1-(9Z-octadecenoyl)-2-octadecanoyl-sn-glycero-3-phosphate + CoA. It carries out the reaction nonadecanoyl-CoA + 1-(9Z-octadecenoyl)-sn-glycero-3-phosphate = 1-(9Z)-octadecenoyl-2-nonadecanoyl-sn-glycero-3-phosphate + CoA. It catalyses the reaction 1-(9Z-octadecenoyl)-sn-glycero-3-phosphoethanolamine + (9Z)-octadecenoyl-CoA = 1,2-di-(9Z-octadecenoyl)-sn-glycero-3-phosphoethanolamine + CoA. The enzyme catalyses 1-(9Z-octadecenoyl)-sn-glycero-3-phosphocholine + (9Z)-octadecenoyl-CoA = 1,2-di-(9Z-octadecenoyl)-sn-glycero-3-phosphocholine + CoA. The catalysed reaction is 1-(9Z-octadecenoyl)-sn-glycero-3-phospho-(1D-myo-inositol) + (5Z,8Z,11Z,14Z)-eicosatetraenoyl-CoA = 1-(9Z-octadecenoyl)-2-(5Z,8Z,11Z,14Z-eicosatetraenoyl)-sn-glycero-3-phospho-1D-myo-inositol + CoA. It carries out the reaction 1-(9Z-octadecenoyl)-sn-glycero-3-phospho-L-serine + (9Z)-octadecenoyl-CoA = 1,2-di-(9Z)-octadecenoyl-sn-glycero-3-phospho-L-serine + CoA. It catalyses the reaction 1-(9Z-octadecenoyl)-sn-glycero-3-phospho-L-serine + (5Z,8Z,11Z,14Z)-eicosatetraenoyl-CoA = 1-(9Z-octadecenoyl)-2-(5Z,8Z,11Z,14Z-eicosatetraenoyl)-sn-glycero-3-phospho-L-serine + CoA. The enzyme catalyses 1-hexadecanoyl-sn-glycero-3-phosphate + (9Z)-octadecenoyl-CoA = 1-hexadecanoyl-2-(9Z-octadecenoyl)-sn-glycero-3-phosphate + CoA. The catalysed reaction is 1-heptadecanoyl-sn-glycero-3-phosphate + (9Z)-octadecenoyl-CoA = 1-heptadecanoyl-2-(9Z)-octadecenoyl-sn-glycero-3-phosphate + CoA. It carries out the reaction 1-(5Z,8Z,11Z,14Z-eicosatetraenoyl)-sn-glycero-3-phosphate + (9Z)-octadecenoyl-CoA = 1-(5Z,8Z,11Z,14Z)-eicosatetraenoyl-2-(9Z)-octadecenoyl-sn-glycero-3-phosphate + CoA. It catalyses the reaction 1-octadecanoyl-sn-glycero-3-phosphate + (9Z)-octadecenoyl-CoA = 1-octadecanoyl-2-(9Z-octadecenoyl)-sn-glycero-3-phosphate + CoA. The enzyme catalyses 1-(9Z-octadecenoyl)-sn-glycero-3-phosphate + (5Z,8Z,11Z,14Z)-eicosatetraenoyl-CoA = 1-(9Z)-octadecenoyl-2-(5Z,8Z,11Z,14Z)-eicosatetraenoyl-sn-glycero-3-phosphate + CoA. The catalysed reaction is heptadecanoyl-CoA + 1-(9Z-octadecenoyl)-sn-glycero-3-phosphate = 1-(9Z)-octadecenoyl-2-heptadecanoyl-sn-glycero-3-phosphate + CoA. It carries out the reaction 1-(9Z-octadecenoyl)-sn-glycero-3-phosphocholine + (5Z,8Z,11Z,14Z)-eicosatetraenoyl-CoA = 1-(9Z)-octadecenoyl-2-(5Z,8Z,11Z,14Z)-icosatetraenoyl-sn-glycero-3-phosphocholine + CoA. It catalyses the reaction 1-(9Z-octadecenoyl)-sn-glycero-3-phosphate + (9Z)-octadecenoyl-CoA = 1,2-di-(9Z-octadecenoyl)-sn-glycero-3-phosphate + CoA. The enzyme catalyses 1-(9Z-octadecenoyl)-sn-glycero-3-phosphate + hexadecanoyl-CoA = 1-hexadecanoyl-2-(9Z-octadecenoyl)-sn-glycero-3-phosphate + CoA. It functions in the pathway phospholipid metabolism; CDP-diacylglycerol biosynthesis; CDP-diacylglycerol from sn-glycerol 3-phosphate: step 2/3. Functionally, converts 1-acyl-sn-glycerol-3-phosphate (lysophosphatidic acid or LPA) into 1,2-diacyl-sn-glycerol-3-phosphate (phosphatidic acid or PA) by incorporating an acyl moiety at the sn-2 position of the glycerol backbone. Acts on LPA containing saturated or unsaturated fatty acids C15:0-C20:4 at the sn-1 position using C18:1-CoA as the acyl donor. Also acts on lysophosphatidylethanolamine using oleoyl-CoA, but not arachidonoyl-CoA, and lysophosphatidylinositol using arachidonoyl-CoA, but not oleoyl-CoA. Activity toward lysophosphatidylglycerol not detectable. The sequence is that of 1-acyl-sn-glycerol-3-phosphate acyltransferase epsilon (AGPAT5) from Homo sapiens (Human).